The primary structure comprises 1115 residues: DNA-directed RNA polymerase subunit beta (1115 aa).

The disordered stretch occupies residues 1084-1115 (HEAGEGEDDEYFEEDEEAVDDEPMTFDDDDME). Acidic residues predominate over residues 1088-1115 (EGEDDEYFEEDEEAVDDEPMTFDDDDME).

It belongs to the RNA polymerase beta chain family. In terms of assembly, the RNAP catalytic core consists of 2 alpha, 1 beta, 1 beta' and 1 omega subunit. When a sigma factor is associated with the core the holoenzyme is formed, which can initiate transcription.

The enzyme catalyses RNA(n) + a ribonucleoside 5'-triphosphate = RNA(n+1) + diphosphate. DNA-dependent RNA polymerase catalyzes the transcription of DNA into RNA using the four ribonucleoside triphosphates as substrates. The sequence is that of DNA-directed RNA polymerase subunit beta from Desulfitobacterium hafniense (strain DSM 10664 / DCB-2).